Here is a 566-residue protein sequence, read N- to C-terminus: Cytoplasmic polyadenylation element-binding protein 2 (566 aa).

2 disordered regions span residues Phe17–Gly46 and Leu64–Gln98. Acidic residues predominate over residues Asp87–Gln98. The RRM domain occupies Met430–Phe512.

Cytoplasmic polyadenylation element binding protein that binds to and regulates the translation of specific mRNAs. This chain is Cytoplasmic polyadenylation element-binding protein 2 (cpb-2), found in Caenorhabditis briggsae.